The chain runs to 364 residues: Very-long-chain (3R)-3-hydroxyacyl-CoA dehydratase 3 (364 aa).

Over 1–151 (MAMENQVLTP…ETLTNLRKGY (151 aa)) the chain is Cytoplasmic. The region spanning 7 to 96 (VLTPHVYWAQ…KVSQWWERLT (90 aa)) is the CS domain. A Phosphothreonine modification is found at threonine 9. Residues 113–138 (LDESDAEMELRAKEEERLNKLRLESE) are a coiled coil. A phosphoserine mark is found at serine 116 and serine 137. A helical membrane pass occupies residues 152–172 (LFMYNLVQFLGFSWIFVNLTV). The Lumenal segment spans residues 173 to 191 (RFCILGKESFYDTFHTVAD). Residues 192-212 (MMYFCQMLAVVETINAAIGVT) form a helical membrane-spanning segment. The Cytoplasmic portion of the chain corresponds to 213–214 (TS). Residues 215-235 (PVLPSLIQLLGRNFILFIIFG) traverse the membrane as a helical segment. Over 236 to 244 (TMEEMQNKA) the chain is Lumenal. A helical transmembrane segment spans residues 245–265 (VVFFVFYLWSAIEIFRYSFYM). The Cytoplasmic portion of the chain corresponds to 266–282 (LTCIDMDWEVLTWLRYT). A helical transmembrane segment spans residues 283-303 (LWIPLYPLGCLAEAVSVVQSI). Residues tyrosine 288 and glutamate 295 contribute to the active site. Residues 304-324 (PIFNETGRFSFTLPYPVKIKV) are Lumenal-facing. A helical membrane pass occupies residues 325–345 (RFSFFLQIYLIMIFLGLYINF). The Cytoplasmic portion of the chain corresponds to 346–364 (RHLYKQRRRRYGQKKKKIH).

Belongs to the very long-chain fatty acids dehydratase HACD family. In terms of assembly, may interact with enzymes of the ELO family (including ELOVL1); with those enzymes that mediate condensation, the first of the four steps of the reaction cycle responsible for fatty acids elongation, may be part of a larger fatty acids elongase complex. Interacts with RAC1.

The protein localises to the endoplasmic reticulum membrane. It catalyses the reaction a very-long-chain (3R)-3-hydroxyacyl-CoA = a very-long-chain (2E)-enoyl-CoA + H2O. The enzyme catalyses (3R)-hydroxyhexadecanoyl-CoA = (2E)-hexadecenoyl-CoA + H2O. It participates in lipid metabolism; fatty acid biosynthesis. Catalyzes the third of the four reactions of the long-chain fatty acids elongation cycle. This endoplasmic reticulum-bound enzymatic process, allows the addition of two carbons to the chain of long- and very long-chain fatty acids/VLCFAs per cycle. This enzyme catalyzes the dehydration of the 3-hydroxyacyl-CoA intermediate into trans-2,3-enoyl-CoA, within each cycle of fatty acid elongation. Thereby, it participates in the production of VLCFAs of different chain lengths that are involved in multiple biological processes as precursors of membrane lipids and lipid mediators. Involved in Rac1-signaling pathways leading to the modulation of gene expression. This is Very-long-chain (3R)-3-hydroxyacyl-CoA dehydratase 3 from Pongo abelii (Sumatran orangutan).